Consider the following 430-residue polypeptide: Ribosomal protein uS12 methylthiotransferase RimO (430 aa).

Residues 1–116 (MRVGIKVLGC…IANALEKGTD (116 aa)) enclose the MTTase N-terminal domain. Cys10, Cys46, Cys79, Cys148, Cys152, and Cys155 together coordinate [4Fe-4S] cluster. The Radical SAM core domain occupies 134–365 (LEERPYAYVK…LLQAEISNSR (232 aa)). The 64-residue stretch at 367–430 (DRFIGRKLKF…DEYDMWGSVT (64 aa)) folds into the TRAM domain.

Belongs to the methylthiotransferase family. RimO subfamily. [4Fe-4S] cluster serves as cofactor.

The protein localises to the cytoplasm. It catalyses the reaction L-aspartate(89)-[ribosomal protein uS12]-hydrogen + (sulfur carrier)-SH + AH2 + 2 S-adenosyl-L-methionine = 3-methylsulfanyl-L-aspartate(89)-[ribosomal protein uS12]-hydrogen + (sulfur carrier)-H + 5'-deoxyadenosine + L-methionine + A + S-adenosyl-L-homocysteine + 2 H(+). Its function is as follows. Catalyzes the methylthiolation of an aspartic acid residue of ribosomal protein uS12. This Thermotoga sp. (strain RQ2) protein is Ribosomal protein uS12 methylthiotransferase RimO.